Reading from the N-terminus, the 450-residue chain is Tubulin alpha-1 chain (450 aa).

The GTP site is built by Gln-11, Glu-71, Gly-144, Thr-145, Thr-179, Asn-206, and Asn-228. Glu-71 is a Mg(2+) binding site. The active site involves Glu-254. At Thr-349 the chain carries Phosphothreonine. The disordered stretch occupies residues 431 to 450; the sequence is DYEEVGGEGAEDDDEEGDEY.

The protein belongs to the tubulin family. Dimer of alpha and beta chains. A typical microtubule is a hollow water-filled tube with an outer diameter of 25 nm and an inner diameter of 15 nM. Alpha-beta heterodimers associate head-to-tail to form protofilaments running lengthwise along the microtubule wall with the beta-tubulin subunit facing the microtubule plus end conferring a structural polarity. Microtubules usually have 13 protofilaments but different protofilament numbers can be found in some organisms and specialized cells. Mg(2+) serves as cofactor. In terms of processing, undergoes a tyrosination/detyrosination cycle, the cyclic removal and re-addition of a C-terminal tyrosine residue by the enzymes tubulin tyrosine carboxypeptidase (TTCP) and tubulin tyrosine ligase (TTL), respectively.

The protein resides in the cytoplasm. It localises to the cytoskeleton. It catalyses the reaction GTP + H2O = GDP + phosphate + H(+). Tubulin is the major constituent of microtubules, a cylinder consisting of laterally associated linear protofilaments composed of alpha- and beta-tubulin heterodimers. Microtubules grow by the addition of GTP-tubulin dimers to the microtubule end, where a stabilizing cap forms. Below the cap, tubulin dimers are in GDP-bound state, owing to GTPase activity of alpha-tubulin. In Arabidopsis thaliana (Mouse-ear cress), this protein is Tubulin alpha-1 chain (TUBA1).